Reading from the N-terminus, the 319-residue chain is Cytochrome f (319 aa).

A signal peptide spans 1 to 34 (MQNRNTYEWTKKMTRLISVLVMIHIITRTSISNA). Residues Tyr35, Cys55, Cys58, and His59 each contribute to the heme site. Residues 285 to 305 (VKGLLLFLASVILAQIFLVLK) traverse the membrane as a helical segment.

It belongs to the cytochrome f family. In terms of assembly, the 4 large subunits of the cytochrome b6-f complex are cytochrome b6, subunit IV (17 kDa polypeptide, petD), cytochrome f and the Rieske protein, while the 4 small subunits are PetG, PetL, PetM and PetN. The complex functions as a dimer. It depends on heme as a cofactor.

It is found in the plastid. Its subcellular location is the chloroplast thylakoid membrane. Functionally, component of the cytochrome b6-f complex, which mediates electron transfer between photosystem II (PSII) and photosystem I (PSI), cyclic electron flow around PSI, and state transitions. In Pinus koraiensis (Korean pine), this protein is Cytochrome f.